The primary structure comprises 234 residues: uncharacterized protein (234 aa).

The next 4 membrane-spanning stretches (helical) occupy residues 28–48, 67–87, 123–143, and 154–174; these read IVII…SIIS, FQIF…FDPI, GGVD…SGTI, and LYCI…GLLY.

This sequence belongs to the complex I subunit 2 family.

The protein localises to the mitochondrion membrane. This is an uncharacterized protein from Neurospora crassa (strain ATCC 24698 / 74-OR23-1A / CBS 708.71 / DSM 1257 / FGSC 987).